The sequence spans 595 residues: DNA primase (595 aa).

A CHC2-type zinc finger spans residues 38-62 (CPFHQEKTPSFTVSNSKRFFYCFGC). Positions 250-332 (NHSILVEGYF…EKKISFIRLP (83 aa)) constitute a Toprim domain. Mg(2+) is bound by residues E256, D300, and D302.

Belongs to the DnaG primase family. Monomer. Interacts with DnaB. Zn(2+) is required as a cofactor. The cofactor is Mg(2+).

The catalysed reaction is ssDNA + n NTP = ssDNA/pppN(pN)n-1 hybrid + (n-1) diphosphate.. In terms of biological role, RNA polymerase that catalyzes the synthesis of short RNA molecules used as primers for DNA polymerase during DNA replication. This chain is DNA primase, found in Rickettsia conorii (strain ATCC VR-613 / Malish 7).